Consider the following 705-residue polypeptide: Gamma-adducin (705 aa).

The span at 1-10 (MSSDTSQAVI) shows a compositional bias: polar residues. Residues 1-22 (MSSDTSQAVITTPPPPSMPHKE) are disordered. Ser2 carries the N-acetylserine modification. A phosphoserine mark is found at Ser31, Ser42, Ser64, Ser402, Ser414, Ser423, Ser442, and Ser461. 4 disordered regions span residues 472–495 (EDPSKVSSGTPIKIEDPNQFVPLN), 535–556 (PSTMRFEDDDQGPPAPPNPFSH), 572–612 (KQQG…EENH), and 658–705 (EITI…KVEA). Lys484 is covalently cross-linked (Glycyl lysine isopeptide (Lys-Gly) (interchain with G-Cter in SUMO2)). Phosphoserine is present on residues Ser583, Ser585, Ser590, Ser672, Ser676, Ser678, and Ser680. A compositionally biased stretch (low complexity) spans 590–605 (SVSQIQSQTQSPQSVP). Positions 681–705 (PSKKKKKFRTPSFLKKNKKKEKVEA) are enriched in basic residues. Residue Ser682 is modified to Phosphoserine; by PKC. The interval 683 to 700 (KKKKKFRTPSFLKKNKKK) is interaction with calmodulin.

The protein belongs to the aldolase class II family. Adducin subfamily. Heterodimer of an alpha and a gamma subunit. Post-translationally, sumoylated. Proteolytically cleaved by asparagine endopeptidase (AEP) into 2 fragments. Overexpression of the 1-357 fragment induces neuronal apoptosis, and overexpression of either 1-357 or 358-706 fragment increases the degeneration of dendritic spines. Overexpression of the 1-357 fragment impairs neurite outgrowth by downregulating the expression of Rac2, and induces synaptic dysfunction and cognitive impairments in tau P301S transgenic mice, a mouse model for Alzheimer disease (AD). In terms of tissue distribution, expressed in kidney, brain, spleen, liver and heart. Expressed in renal interlobular arteries, afferent/efferent arterioles, parietal glomerular epithelial cells and microvilli of the luminal surface of the proximal tubule (at protein level). Expressed in podocytes (at protein level) Expressed in renal cortex (at protein level). Expressed in primary vascular smooth muscle cells (VSMCs) of the kidney (at protein level). Expressed in tubular cells and glomeruli (at protein level).

The protein resides in the cytoplasm. It localises to the cytoskeleton. It is found in the cell membrane. Functionally, membrane-cytoskeleton-associated protein that promotes the assembly of the spectrin-actin network. Plays a role in actin filament capping. Binds to calmodulin. Involved in myogenic reactivity of the renal afferent arteriole (Af-art), renal interlobular arteries and middle cerebral artery (MCA) to increased perfusion pressure. Involved in regulation of potassium channels in the vascular smooth muscle cells (VSMCs) of the Af-art and MCA ex vivo. Involved in regulation of glomerular capillary pressure, glomerular filtration rate (GFR) and glomerular nephrin expression in response to hypertension. Involved in renal blood flow (RBF) autoregulation. Plays a role in podocyte structure and function. Regulates globular monomer actin (G-actin) and filamentous polymer actin (F-actin) ratios in the primary podocytes affecting actin cytoskeleton organization. Regulates expression of synaptopodin, RhoA, Rac1 and CDC42 in the renal cortex and the primary podocytes. Regulates expression of nephrin in the glomeruli and in the primary podocytes, expression of nephrin and podocinin in the renal cortex, and expression of focal adhesion proteins integrin alpha-3 and integrin beta-1 in the glomeruli. Involved in cell migration and cell adhesion of podocytes, and in podocyte foot process effacement. Regulates expression of profibrotics markers MMP2, MMP9, TGF beta-1, tubular tight junction protein E-cadherin, and mesenchymal markers vimentin and alpha-SMA. Promotes the growth of neurites. The chain is Gamma-adducin (Add3) from Rattus norvegicus (Rat).